A 365-amino-acid polypeptide reads, in one-letter code: Myb/SANT-like DNA-binding domain-containing protein 3 (365 aa).

Residues 13-78 (FSELEKSVLL…QLKKCWENIK (66 aa)) form the Myb-like domain. Residues 301–337 (QLIQMNEVHVAKVQQIERECEMAEEEHRIKMEILNKK) adopt a coiled-coil conformation.

This sequence belongs to the MSANTD3 family.

The sequence is that of Myb/SANT-like DNA-binding domain-containing protein 3 (msantd3) from Xenopus tropicalis (Western clawed frog).